Consider the following 306-residue polypeptide: Putative NylC-analogous protein (306 aa).

The protein belongs to the peptidase S58 family.

The protein is Putative NylC-analogous protein of Agromyces sp. (strain KY5R).